The sequence spans 403 residues: Farnesyl pyrophosphate synthase (403 aa).

Positions 156 and 160 each coordinate Mg(2+). The DDXXD motif motif lies at 156-160 (DDLAD).

Belongs to the FPP/GGPP synthase family. Requires Mg(2+) as cofactor.

It catalyses the reaction isopentenyl diphosphate + (2E)-geranyl diphosphate = (2Z,6E)-farnesyl diphosphate + diphosphate. It functions in the pathway pheromone biosynthesis. Functionally, farnesyl pyrophosphate synthase involved in pheromone biosynthesis by catalyzing the formation of (2Z,6E)-farnesyl diphosphate. The protein is Farnesyl pyrophosphate synthase of Nezara viridula (Southern green stink bug).